The chain runs to 462 residues: Argininosuccinate lyase 2 (462 aa).

It belongs to the lyase 1 family. Argininosuccinate lyase subfamily.

Its subcellular location is the cytoplasm. The enzyme catalyses 2-(N(omega)-L-arginino)succinate = fumarate + L-arginine. It participates in amino-acid biosynthesis; L-arginine biosynthesis; L-arginine from L-ornithine and carbamoyl phosphate: step 3/3. The chain is Argininosuccinate lyase 2 from Shouchella clausii (strain KSM-K16) (Alkalihalobacillus clausii).